The primary structure comprises 468 residues: uncharacterized protein (468 aa).

The disordered stretch occupies residues 1 to 22 (MVKRSSHRQVVLDEDDEENYNN). An RING-type zinc finger spans residues 85 to 123 (CPICTEALQRPFTTHCGHTYCYECLLNWLKESKSCPTCR). Low complexity predominate over residues 386-402 (DSLNSSSNNSPSHNNIH). The interval 386 to 468 (DSLNSSSNNS…TIQLDSDEES (83 aa)) is disordered. The segment covering 417–434 (IVTNGTGLRSSQSSSQNR) has biased composition (polar residues).

The protein localises to the nucleus. This is an uncharacterized protein from Schizosaccharomyces pombe (strain 972 / ATCC 24843) (Fission yeast).